Consider the following 264-residue polypeptide: Adenosylcobinamide-GDP ribazoletransferase (264 aa).

Helical transmembrane passes span 10–30, 43–63, 113–133, 141–161, 183–203, 205–225, and 243–263; these read LFFI…VGYT, LVGA…AQVW, LGSY…VALY, VQAL…PVAL, VSDA…AAAW, LGAS…LAAF, and GAAQ…GVWF.

It belongs to the CobS family. It depends on Mg(2+) as a cofactor.

The protein resides in the cell inner membrane. It catalyses the reaction alpha-ribazole + adenosylcob(III)inamide-GDP = adenosylcob(III)alamin + GMP + H(+). The catalysed reaction is alpha-ribazole 5'-phosphate + adenosylcob(III)inamide-GDP = adenosylcob(III)alamin 5'-phosphate + GMP + H(+). It participates in cofactor biosynthesis; adenosylcobalamin biosynthesis; adenosylcobalamin from cob(II)yrinate a,c-diamide: step 7/7. Its function is as follows. Joins adenosylcobinamide-GDP and alpha-ribazole to generate adenosylcobalamin (Ado-cobalamin). Also synthesizes adenosylcobalamin 5'-phosphate from adenosylcobinamide-GDP and alpha-ribazole 5'-phosphate. The protein is Adenosylcobinamide-GDP ribazoletransferase of Leptothrix cholodnii (strain ATCC 51168 / LMG 8142 / SP-6) (Leptothrix discophora (strain SP-6)).